Reading from the N-terminus, the 300-residue chain is Type 1 fimbrin D-mannose specific adhesin (300 aa).

The signal sequence occupies residues 1–21; that stretch reads MKRVITLFAVLLMGWSVNAWS.

The protein belongs to the fimbrial protein family.

Its subcellular location is the fimbrium. Involved in regulation of length and mediation of adhesion of type 1 fimbriae (but not necessary for the production of fimbriae). Adhesin responsible for the binding to D-mannose. It is laterally positioned at intervals in the structure of the type 1 fimbriae. In order to integrate FimH in the fimbriae FimF and FimG are needed. The sequence is that of Type 1 fimbrin D-mannose specific adhesin (fimH) from Escherichia coli (strain K12).